A 300-amino-acid polypeptide reads, in one-letter code: Ribosomal RNA small subunit methyltransferase H (300 aa).

Residues 46-48 (GGH), D65, F92, D107, and Q114 contribute to the S-adenosyl-L-methionine site.

Belongs to the methyltransferase superfamily. RsmH family.

It is found in the cytoplasm. The enzyme catalyses cytidine(1402) in 16S rRNA + S-adenosyl-L-methionine = N(4)-methylcytidine(1402) in 16S rRNA + S-adenosyl-L-homocysteine + H(+). Functionally, specifically methylates the N4 position of cytidine in position 1402 (C1402) of 16S rRNA. The chain is Ribosomal RNA small subunit methyltransferase H from Prochlorococcus marinus (strain MIT 9301).